The primary structure comprises 278 residues: NAD kinase (278 aa).

The active-site Proton acceptor is Asp-56. Residues 56-57 (DG), 132-133 (NE), Arg-158, Asp-160, and 171-176 (TAYNKS) each bind NAD(+).

The protein belongs to the NAD kinase family. A divalent metal cation is required as a cofactor.

Its subcellular location is the cytoplasm. The enzyme catalyses NAD(+) + ATP = ADP + NADP(+) + H(+). Its function is as follows. Involved in the regulation of the intracellular balance of NAD and NADP, and is a key enzyme in the biosynthesis of NADP. Catalyzes specifically the phosphorylation on 2'-hydroxyl of the adenosine moiety of NAD to yield NADP. The polypeptide is NAD kinase (Streptococcus agalactiae serotype V (strain ATCC BAA-611 / 2603 V/R)).